The following is a 745-amino-acid chain: Interleukin-17 receptor D (745 aa).

The signal sequence occupies residues 1–26; the sequence is MAGSRRLAHFFMASCLFLCYTASVNG. The Extracellular segment spans residues 27–298; sequence GKRGNSDKCS…VHSPWAGPIR (272 aa). N-linked (GlcNAc...) asparagine glycans are attached at residues Asn61, Asn79, Asn136, Asn170, Asn205, and Asn276. A helical transmembrane segment spans residues 299–319; that stretch reads AMAITVPLVIMSAFATLFTVM. Topologically, residues 320-745 are cytoplasmic; sequence CRKKQQENIY…SEGLIAAAST (426 aa). The 165-residue stretch at 354-518 folds into the SEFIR domain; that stretch reads RPKIFICYSS…LMDQLPQLFA (165 aa). Disordered regions lie at residues 432–454 and 631–713; these read RHRK…DSSS and REDL…PPAV. Residues 439-448 show a composition bias toward basic and acidic residues; sequence TSKEKNREPS. A compositionally biased stretch (low complexity) spans 693-705; sequence SSLADSVSSSSGL.

In terms of assembly, interacts with fgfr1 and fgfr2.

The protein resides in the membrane. In terms of biological role, feedback inhibitor of fibroblast growth factor mediated Ras-MAPK signaling and ERK activation. May inhibit FGF-induced FGFR1 tyrosine phosphorylation. This is Interleukin-17 receptor D (il17rd) from Danio rerio (Zebrafish).